A 188-amino-acid polypeptide reads, in one-letter code: Crossover junction endodeoxyribonuclease RuvC (188 aa).

Residues Asp-7, Glu-68, and Asp-141 contribute to the active site. Residues Asp-7, Glu-68, and Asp-141 each contribute to the Mg(2+) site.

The protein belongs to the RuvC family. In terms of assembly, homodimer which binds Holliday junction (HJ) DNA. The HJ becomes 2-fold symmetrical on binding to RuvC with unstacked arms; it has a different conformation from HJ DNA in complex with RuvA. In the full resolvosome a probable DNA-RuvA(4)-RuvB(12)-RuvC(2) complex forms which resolves the HJ. It depends on Mg(2+) as a cofactor.

The protein resides in the cytoplasm. It catalyses the reaction Endonucleolytic cleavage at a junction such as a reciprocal single-stranded crossover between two homologous DNA duplexes (Holliday junction).. Its function is as follows. The RuvA-RuvB-RuvC complex processes Holliday junction (HJ) DNA during genetic recombination and DNA repair. Endonuclease that resolves HJ intermediates. Cleaves cruciform DNA by making single-stranded nicks across the HJ at symmetrical positions within the homologous arms, yielding a 5'-phosphate and a 3'-hydroxyl group; requires a central core of homology in the junction. The consensus cleavage sequence is 5'-(A/T)TT(C/G)-3'. Cleavage occurs on the 3'-side of the TT dinucleotide at the point of strand exchange. HJ branch migration catalyzed by RuvA-RuvB allows RuvC to scan DNA until it finds its consensus sequence, where it cleaves and resolves the cruciform DNA. The sequence is that of Crossover junction endodeoxyribonuclease RuvC from Mycobacterium leprae (strain TN).